The following is a 68-amino-acid chain: uncharacterized protein (68 aa).

This is an uncharacterized protein from Escherichia coli O6:H1 (strain CFT073 / ATCC 700928 / UPEC).